The sequence spans 185 residues: Elongation factor P (185 aa).

It belongs to the elongation factor P family.

The protein resides in the cytoplasm. Its pathway is protein biosynthesis; polypeptide chain elongation. Its function is as follows. Involved in peptide bond synthesis. Stimulates efficient translation and peptide-bond synthesis on native or reconstituted 70S ribosomes in vitro. Probably functions indirectly by altering the affinity of the ribosome for aminoacyl-tRNA, thus increasing their reactivity as acceptors for peptidyl transferase. The protein is Elongation factor P of Limosilactobacillus reuteri (strain DSM 20016) (Lactobacillus reuteri).